The sequence spans 74 residues: Probable molt-inhibiting hormone (74 aa).

3 disulfides stabilise this stretch: Cys-6–Cys-43, Cys-23–Cys-39, and Cys-26–Cys-52. Residue Ala-74 is modified to Alanine amide.

The protein resides in the secreted. Inhibits Y-organs where molting hormone (ecdysteroid) is secreted. A molting cycle is initiated when MIH secretion diminishes or stops. Has little or no hyperglycemic activity. This is Probable molt-inhibiting hormone from Jasus lalandii (Cape rock lobster).